The sequence spans 384 residues: 8-amino-7-oxononanoate synthase (384 aa).

Arginine 21 contributes to the substrate binding site. Pyridoxal 5'-phosphate is bound at residue 108-109 (GF). Histidine 133 contributes to the substrate binding site. Pyridoxal 5'-phosphate contacts are provided by serine 179, histidine 207, and threonine 233. Position 236 is an N6-(pyridoxal phosphate)lysine (lysine 236). Threonine 352 provides a ligand contact to substrate.

This sequence belongs to the class-II pyridoxal-phosphate-dependent aminotransferase family. BioF subfamily. In terms of assembly, homodimer. Pyridoxal 5'-phosphate is required as a cofactor.

It carries out the reaction 6-carboxyhexanoyl-[ACP] + L-alanine + H(+) = (8S)-8-amino-7-oxononanoate + holo-[ACP] + CO2. It functions in the pathway cofactor biosynthesis; biotin biosynthesis. Catalyzes the decarboxylative condensation of pimeloyl-[acyl-carrier protein] and L-alanine to produce 8-amino-7-oxononanoate (AON), [acyl-carrier protein], and carbon dioxide. The polypeptide is 8-amino-7-oxononanoate synthase (Escherichia coli O6:K15:H31 (strain 536 / UPEC)).